The primary structure comprises 439 residues: Chromosomal replication initiator protein DnaA (439 aa).

The segment at 1–75 (MESWSRCLER…GIREVVLAIG (75 aa)) is domain I, interacts with DnaA modulators. The interval 75–101 (GSRPKTTELPVPVDTTGRLSSTVPFNG) is domain II. Positions 102–319 (NLDTHYNFDN…GALNTLVARA (218 aa)) are domain III, AAA+ region. Residues Gly-147, Gly-149, Lys-150, and Thr-151 each contribute to the ATP site. Residues 320 to 439 (NFTGRAVTIE…WDKLMRKFSE (120 aa)) are domain IV, binds dsDNA.

Belongs to the DnaA family. Oligomerizes as a right-handed, spiral filament on DNA at oriC.

It is found in the cytoplasm. In terms of biological role, plays an essential role in the initiation and regulation of chromosomal replication. ATP-DnaA binds to the origin of replication (oriC) to initiate formation of the DNA replication initiation complex once per cell cycle. Binds the DnaA box (a 9 base pair repeat at the origin) and separates the double-stranded (ds)DNA. Forms a right-handed helical filament on oriC DNA; dsDNA binds to the exterior of the filament while single-stranded (ss)DNA is stabiized in the filament's interior. The ATP-DnaA-oriC complex binds and stabilizes one strand of the AT-rich DNA unwinding element (DUE), permitting loading of DNA polymerase. After initiation quickly degrades to an ADP-DnaA complex that is not apt for DNA replication. Binds acidic phospholipids. The sequence is that of Chromosomal replication initiator protein DnaA from Xylella fastidiosa (strain 9a5c).